Here is a 232-residue protein sequence, read N- to C-terminus: Lipoarabinomannan carrier protein LprG (232 aa).

The N-terminal stretch at 1-21 (MQTRLTAILAAFLTAVALLAG) is a signal peptide. Cys-22 carries the N-palmitoyl cysteine lipid modification. A lipid anchor (S-diacylglycerol cysteine) is attached at Cys-22.

The protein belongs to the LppX/LprAFG lipoprotein family. In terms of processing, modified by Lgt on Cys-22 with an S-linked diacylglyceral, signal peptide is removed by LspA, Cys-22 is further modifed with a fatty acid on its amino group by Lnt yielding a triacylated protein.

The protein localises to the cell inner membrane. Its function is as follows. Helps membrane protein MHAS_02168/C731_2106 (P55) transport triacylglycerides (TAG) across the inner cell membrane into the periplasm and probably ultimately to the outer membrane. Binds TAG in its hydrophobic cavity and transfers it between lipid bilayers. TAG probably regulates lipid metabolism and growth regulation and plays a structural role in the outer membrane. Also binds mannosides, lipoarabinomannan and lipomannan and various glycolipids in the same cavity. The lprG-MHAS_02167/C731_2107 operon complements the vancomycin sensitivity of an M.smegmatis knockout of the same operon. This chain is Lipoarabinomannan carrier protein LprG, found in Mycolicibacterium hassiacum (strain DSM 44199 / CIP 105218 / JCM 12690 / 3849) (Mycobacterium hassiacum).